Consider the following 431-residue polypeptide: GTPase Obg (431 aa).

In terms of domain architecture, Obg spans 1–158 (MFVDQVKISL…IEVTLELKLL (158 aa)). The tract at residues 118–144 (KGGRGGRGNSRFASPRNPAPDFSENGE) is disordered. Residues 159–330 (ADVGLVGFPS…LLYAIADKLE (172 aa)) enclose the OBG-type G domain. GTP-binding positions include 165 to 172 (GFPSVGKS), 190 to 194 (FTTIK), 212 to 215 (DLPG), 282 to 285 (NKMD), and 311 to 313 (STF). Mg(2+) contacts are provided by S172 and T192. The 79-residue stretch at 353 to 431 (KHTPSQDKFT…ILGGEFEFVE (79 aa)) folds into the OCT domain.

This sequence belongs to the TRAFAC class OBG-HflX-like GTPase superfamily. OBG GTPase family. In terms of assembly, monomer. Mg(2+) is required as a cofactor.

It is found in the cytoplasm. In terms of biological role, an essential GTPase which binds GTP, GDP and possibly (p)ppGpp with moderate affinity, with high nucleotide exchange rates and a fairly low GTP hydrolysis rate. Plays a role in control of the cell cycle, stress response, ribosome biogenesis and in those bacteria that undergo differentiation, in morphogenesis control. This is GTPase Obg from Staphylococcus saprophyticus subsp. saprophyticus (strain ATCC 15305 / DSM 20229 / NCIMB 8711 / NCTC 7292 / S-41).